The following is an 856-amino-acid chain: Cyclic di-GMP phosphodiesterase PdeB (856 aa).

2 consecutive transmembrane segments (helical) span residues 7–27 (ILVF…YCLG) and 230–250 (WVSL…YVWL). In terms of domain architecture, PAS spans 303–350 (QKERGKITLESIAEAVILTDIEAKVIYMNPKAETLLEVASSNAVGESL). The GGDEF domain occupies 454–587 (RSLAVCYLDL…GTNQIHIYDD (134 aa)). Residues 598–852 (APKWAVRIAQ…SYCEQFETRL (255 aa)) enclose the EAL domain.

It localises to the cell membrane. The enzyme catalyses 3',3'-c-di-GMP + H2O = 5'-phosphoguanylyl(3'-&gt;5')guanosine + H(+). Its function is as follows. Affects motility and biofilm formation, and is linked to the regulation of sulfate uptake and assimilation. This is Cyclic di-GMP phosphodiesterase PdeB (pdeB) from Shewanella oneidensis (strain ATCC 700550 / JCM 31522 / CIP 106686 / LMG 19005 / NCIMB 14063 / MR-1).